We begin with the raw amino-acid sequence, 273 residues long: Undecaprenyl-diphosphatase (273 aa).

The next 7 membrane-spanning stretches (helical) occupy residues 6–26, 45–65, 90–110, 116–136, 190–210, 222–242, and 252–272; these read SLLI…LPVS, AKTF…VMFW, LTLI…LVFH, LFNP…LIAA, YAAS…ATVL, ADIP…LIAI, and ISFI…YVVF.

Belongs to the UppP family.

The protein resides in the cell inner membrane. The catalysed reaction is di-trans,octa-cis-undecaprenyl diphosphate + H2O = di-trans,octa-cis-undecaprenyl phosphate + phosphate + H(+). Its function is as follows. Catalyzes the dephosphorylation of undecaprenyl diphosphate (UPP). Confers resistance to bacitracin. The sequence is that of Undecaprenyl-diphosphatase from Salmonella arizonae (strain ATCC BAA-731 / CDC346-86 / RSK2980).